The primary structure comprises 127 residues: MYENLKSLGIQEPTSVDSYTLRQEANHDILKIYFKKQKGEFFAKSVKFKYPRQRKTMLVDSGTHEYKDVTEINANLKYVVDELDNLTQGVHIQADPDIKQKILRDLRHLEKVVQNKISEIERDLEKL.

It belongs to the UPF0325 family.

The protein is UPF0325 protein ASA_3165 of Aeromonas salmonicida (strain A449).